Here is a 59-residue protein sequence, read N- to C-terminus: uncharacterized protein (59 aa).

This is an uncharacterized protein from Dictyostelium discoideum (Social amoeba).